A 166-amino-acid chain; its full sequence is NADH-quinone oxidoreductase subunit C (166 aa).

It belongs to the complex I 30 kDa subunit family. NDH-1 is composed of 14 different subunits. Subunits NuoB, C, D, E, F, and G constitute the peripheral sector of the complex.

It is found in the cell inner membrane. It carries out the reaction a quinone + NADH + 5 H(+)(in) = a quinol + NAD(+) + 4 H(+)(out). In terms of biological role, NDH-1 shuttles electrons from NADH, via FMN and iron-sulfur (Fe-S) centers, to quinones in the respiratory chain. The immediate electron acceptor for the enzyme in this species is believed to be a menaquinone. Couples the redox reaction to proton translocation (for every two electrons transferred, four hydrogen ions are translocated across the cytoplasmic membrane), and thus conserves the redox energy in a proton gradient. The protein is NADH-quinone oxidoreductase subunit C of Chlorobium phaeobacteroides (strain DSM 266 / SMG 266 / 2430).